Reading from the N-terminus, the 319-residue chain is Ribonucleoside-diphosphate reductase small chain (319 aa).

The interaction with R1 stretch occupies residues 313–319 (FSLDVDF).

This sequence belongs to the ribonucleoside diphosphate reductase small chain family. Interacts with RNR1/OPG080 subunit. Can interact with host RNR1 supunit. The cofactor is Fe cation.

The enzyme catalyses a 2'-deoxyribonucleoside 5'-diphosphate + [thioredoxin]-disulfide + H2O = a ribonucleoside 5'-diphosphate + [thioredoxin]-dithiol. Ribonucleoside-diphosphate reductase holoenzyme provides the precursors necessary for viral DNA synthesis. Allows virus growth in non-dividing cells. Catalyzes the biosynthesis of deoxyribonucleotides from the corresponding ribonucleotides. In Cynomys gunnisoni (Gunnison's prairie dog), this protein is Ribonucleoside-diphosphate reductase small chain (OPG048).